The following is a 312-amino-acid chain: Putative HTH-type transcriptional regulatory protein Ta1363 (312 aa).

The HTH cro/C1-type domain maps to 133-186; sequence LREMRMKMSLSIGYLSHYLGVSRRSVSLYENGSSATIDVFLKLQEIIKSDLVDH. The segment at residues 144–163 is a DNA-binding region (H-T-H motif); it reads IGYLSHYLGVSRRSVSLYEN.

In Thermoplasma acidophilum (strain ATCC 25905 / DSM 1728 / JCM 9062 / NBRC 15155 / AMRC-C165), this protein is Putative HTH-type transcriptional regulatory protein Ta1363.